Here is a 429-residue protein sequence, read N- to C-terminus: Xyloglucan O-acetyltransferase 1 (429 aa).

Residues 1–20 (MGSPFKDHHHHHHPFSLAKK) are Cytoplasmic-facing. Residues 21-41 (LIPWTFYAMIPLVLFRLYFYP) form a helical; Signal-anchor for type II membrane protein membrane-spanning segment. At 42-429 (YPLHNITTPI…KWDYESRREE (388 aa)) the chain is on the lumenal side. Residues asparagine 46 and asparagine 89 are each glycosylated (N-linked (GlcNAc...) asparagine). Cystine bridges form between cysteine 72/cysteine 122, cysteine 93/cysteine 158, cysteine 102/cysteine 402, and cysteine 317/cysteine 398. The GDS motif motif lies at 145–147 (GDS). The Nucleophile role is filled by serine 147. Residues asparagine 189, asparagine 263, and asparagine 351 are each glycosylated (N-linked (GlcNAc...) asparagine). The Proton donor role is filled by aspartate 397. Residues 397–400 (DCVH) carry the DXXH motif motif. Catalysis depends on histidine 400, which acts as the Proton acceptor.

It belongs to the PC-esterase family. TBL subfamily.

The protein localises to the golgi apparatus membrane. Xyloglucan acetyltransferase that catalyzes the acetylation of fucosylated Gal residues on xyloglucan side chains. Predominantly catalyze 6-O-monoacetylation of Gal residues in the Fuc-Gal-Xyl trisaccharide side chains of xyloglucan oligomers. The polypeptide is Xyloglucan O-acetyltransferase 1 (Populus trichocarpa (Western balsam poplar)).